Consider the following 1416-residue polypeptide: DNA-directed RNA polymerase subunit beta' (1416 aa).

Zn(2+) contacts are provided by cysteine 71, cysteine 73, cysteine 86, and cysteine 89. Positions 461, 463, and 465 each coordinate Mg(2+). Zn(2+) is bound by residues cysteine 815, cysteine 889, cysteine 896, and cysteine 899.

Belongs to the RNA polymerase beta' chain family. The RNAP catalytic core consists of 2 alpha, 1 beta, 1 beta' and 1 omega subunit. When a sigma factor is associated with the core the holoenzyme is formed, which can initiate transcription. Mg(2+) is required as a cofactor. It depends on Zn(2+) as a cofactor.

It catalyses the reaction RNA(n) + a ribonucleoside 5'-triphosphate = RNA(n+1) + diphosphate. DNA-dependent RNA polymerase catalyzes the transcription of DNA into RNA using the four ribonucleoside triphosphates as substrates. This is DNA-directed RNA polymerase subunit beta' from Haemophilus influenzae (strain PittGG).